Reading from the N-terminus, the 338-residue chain is 3-isopropylmalate dehydrogenase (338 aa).

The substrate site is built by R88, R98, R122, and D212. 3 residues coordinate Mg(2+): D212, D236, and D240. Residue 272–284 (GSAPDIAGQGIAD) coordinates NAD(+).

This sequence belongs to the isocitrate and isopropylmalate dehydrogenases family. LeuB type 2 subfamily. As to quaternary structure, homodimer. It depends on Mg(2+) as a cofactor. The cofactor is Mn(2+).

The protein resides in the cytoplasm. It carries out the reaction (2R,3S)-3-isopropylmalate + NAD(+) = 4-methyl-2-oxopentanoate + CO2 + NADH. Its pathway is amino-acid biosynthesis; L-leucine biosynthesis; L-leucine from 3-methyl-2-oxobutanoate: step 3/4. Catalyzes the oxidation of 3-carboxy-2-hydroxy-4-methylpentanoate (3-isopropylmalate) to 3-carboxy-4-methyl-2-oxopentanoate. The product decarboxylates to 4-methyl-2 oxopentanoate. The protein is 3-isopropylmalate dehydrogenase of Corynebacterium jeikeium (strain K411).